Consider the following 73-residue polypeptide: Sec-independent protein translocase protein TatA (73 aa).

Residues 1 to 21 form a helical membrane-spanning segment; sequence MGLSWQQLLILLLVVVVIFGT.

Belongs to the TatA/E family. As to quaternary structure, the Tat system comprises two distinct complexes: a TatABC complex, containing multiple copies of TatA, TatB and TatC subunits, and a separate TatA complex, containing only TatA subunits. Substrates initially bind to the TatABC complex, which probably triggers association of the separate TatA complex to form the active translocon.

The protein resides in the cell inner membrane. Its function is as follows. Part of the twin-arginine translocation (Tat) system that transports large folded proteins containing a characteristic twin-arginine motif in their signal peptide across membranes. TatA could form the protein-conducting channel of the Tat system. This is Sec-independent protein translocase protein TatA from Histophilus somni (strain 129Pt) (Haemophilus somnus).